Here is a 146-residue protein sequence, read N- to C-terminus: MIEMYRKILVPTMGEYMDELIEHTLDLLHGREAEVICLYVVDTAVPFLTPKKVKEMMVKELTQRGNEILRDMEKGLTGPENPNVSFRAVMREGDPADEIVKVAEEEDVDVIVMGTGKSLVDKHLLGSVSEKVVHYAPCTIHLVRTV.

The protein belongs to the universal stress protein A family.

This is Universal stress protein MTH_1154 from Methanothermobacter thermautotrophicus (strain ATCC 29096 / DSM 1053 / JCM 10044 / NBRC 100330 / Delta H) (Methanobacterium thermoautotrophicum).